Consider the following 879-residue polypeptide: Alanine--tRNA ligase (879 aa).

4 residues coordinate Zn(2+): His566, His570, Cys668, and His672.

This sequence belongs to the class-II aminoacyl-tRNA synthetase family. Requires Zn(2+) as cofactor.

The protein localises to the cytoplasm. It catalyses the reaction tRNA(Ala) + L-alanine + ATP = L-alanyl-tRNA(Ala) + AMP + diphosphate. Its function is as follows. Catalyzes the attachment of alanine to tRNA(Ala) in a two-step reaction: alanine is first activated by ATP to form Ala-AMP and then transferred to the acceptor end of tRNA(Ala). Also edits incorrectly charged Ser-tRNA(Ala) and Gly-tRNA(Ala) via its editing domain. The protein is Alanine--tRNA ligase of Clostridium perfringens (strain 13 / Type A).